We begin with the raw amino-acid sequence, 245 residues long: 5-oxoprolinase subunit A (245 aa).

Belongs to the LamB/PxpA family. In terms of assembly, forms a complex composed of PxpA, PxpB and PxpC.

It carries out the reaction 5-oxo-L-proline + ATP + 2 H2O = L-glutamate + ADP + phosphate + H(+). In terms of biological role, catalyzes the cleavage of 5-oxoproline to form L-glutamate coupled to the hydrolysis of ATP to ADP and inorganic phosphate. The protein is 5-oxoprolinase subunit A of Cronobacter sakazakii (strain ATCC BAA-894) (Enterobacter sakazakii).